The sequence spans 217 residues: MRQKYYIEAAARGLVGSCPGQARYLLWAYSSTHEDNSTFQETCPHCFQLLVLDNSRVRLKPKAKLTPKIQKLLNREARNDTLSFKEAKLLRKYKDSTSVLLITCRTCNRTVRHHGKSRSFLWALKSNAATAANKASPKTPKRTAPGSANLGQSTNGSKGKSPSLTIRTPTSGQSTPICSSRNGSKRKKHFSQLKALLSQSASDKNPKLDFRHFLSSL.

Serine 126 bears the Phosphoserine mark. Phosphothreonine occurs at positions 130 and 139. Residues 131–190 (AANKASPKTPKRTAPGSANLGQSTNGSKGKSPSLTIRTPTSGQSTPICSSRNGSKRKKHF) are disordered. The span at 149 to 182 (NLGQSTNGSKGKSPSLTIRTPTSGQSTPICSSRN) shows a compositional bias: polar residues.

Belongs to the UPF0711 family.

This Mus musculus (Mouse) protein is UPF0711 protein C18orf21 homolog.